The primary structure comprises 74 residues: uncharacterized protein (74 aa).

A coiled-coil region spans residues glutamine 25–valine 62.

This is an uncharacterized protein from Bacillus subtilis (strain 168).